The primary structure comprises 327 residues: Thioredoxin reductase (327 aa).

Residues 10–13 (SGPA), 39–40 (IA), Q44, N53, V86, C143, D286, and 293–295 (RQA) contribute to the FAD site. A disulfide bridge connects residues C140 and C143.

The protein belongs to the class-II pyridine nucleotide-disulfide oxidoreductase family. As to quaternary structure, homodimer. Requires FAD as cofactor.

Its subcellular location is the cytoplasm. The enzyme catalyses [thioredoxin]-dithiol + NADP(+) = [thioredoxin]-disulfide + NADPH + H(+). Functionally, component of the thioredoxin-thioredoxin reductase system which may be involved in biosynthesis of penicillins and cephalosporins and may be important in determining the thiol-disulfide redox balance. This chain is Thioredoxin reductase (TRR1), found in Pneumocystis jirovecii (Human pneumocystis pneumonia agent).